The sequence spans 1502 residues: Ras guanine nucleotide exchange factor P (1502 aa).

Positions 84–187 (FIIDNQVLDW…LLYSLMKFSE (104 aa)) constitute a Calponin-homology (CH) domain. Disordered stretches follow at residues 216–242 (AQSSSSSPTTSTSASTSTSTSPSSSNE), 325–436 (QQQQ…PNNN), 456–534 (EDNT…VGRG), and 589–935 (TTTA…NQNN). Low complexity-rich tracts occupy residues 218-242 (SSSSSPTTSTSASTSTSTSPSSSNE), 325-345 (QQQQPPPQTSTCTTTQPTTTT), 371-400 (TTSSIIKKAAPAPLKKPSPANTSSNSLLNH), and 407-421 (SSSTASSAINTPIST). Residues 287-328 (QQQQQQQQQQQQQQQQQQQQQQQQQQQQQQQQQQQQQQQQQQ) adopt a coiled-coil conformation. Positions 422-436 (PSTSKSNSFQKPNNN) are enriched in polar residues. Residues 451 to 515 (EENEIEDNTN…NQNENEDEVK (65 aa)) are a coiled coil. The span at 458–508 (NTNNNNNNNNNNNNNNNNNNNNNNNNNNNNNNNNTNDNINNNNKNNNNNQN) shows a compositional bias: low complexity. Positions 518 to 528 (HSPPKVRPPLP) are enriched in pro residues. 5 stretches are compositionally biased toward low complexity: residues 589 to 646 (TTTA…NNNN), 663 to 675 (TISTSSPSTTGTI), 686 to 719 (SQPLNNNNNINNENNNSNNSNSLVTSSSPPLSLP), 764 to 790 (NSINQPPSNSSPKQSPVPNNPPSVSQS), and 813 to 853 (NSNS…NNNN). Polar residues predominate over residues 861–876 (LTMSNQSANSLKSSGN). A compositionally biased stretch (low complexity) spans 883–935 (TNGNNNISQNQNQNQNQNQNQTQNQNQNQNQNHISHSNSISSGNLNNHVNQNN). Residues 1032–1076 (VEENKNLITRTEEMQKMIDSLMKEKKELINEKNTLASMLAKTKQQ) adopt a coiled-coil conformation. The N-terminal Ras-GEF domain maps to 1102 to 1249 (GKYEIKGGTT…SELKLVFSTP (148 aa)). Positions 1267–1498 (DPAEIARQLT…FNLSLICEPR (232 aa)) constitute a Ras-GEF domain.

In terms of biological role, promotes the exchange of Ras-bound GDP by GTP. The protein is Ras guanine nucleotide exchange factor P (gefP) of Dictyostelium discoideum (Social amoeba).